The sequence spans 61 residues: Small ribosomal subunit protein uS14B (61 aa).

4 residues coordinate Zn(2+): cysteine 24, cysteine 27, cysteine 40, and cysteine 43.

The protein belongs to the universal ribosomal protein uS14 family. Zinc-binding uS14 subfamily. Part of the 30S ribosomal subunit. Contacts proteins S3 and S10. Zn(2+) serves as cofactor.

Functionally, binds 16S rRNA, required for the assembly of 30S particles and may also be responsible for determining the conformation of the 16S rRNA at the A site. The protein is Small ribosomal subunit protein uS14B of Staphylococcus saprophyticus subsp. saprophyticus (strain ATCC 15305 / DSM 20229 / NCIMB 8711 / NCTC 7292 / S-41).